A 307-amino-acid chain; its full sequence is MEASRWWLLVTVLMAGAHCVALVDQEASDLIHSGPQDSSPGPALPCHKISVSNIDFAFKLYRQLALNAPGENILFFPVSISLALAMLSWGAPVASRTQLLEGLGFTLTVVPEEEIQEGFWDLLIRLRGQGPRLLLTMDQRRFSGLGARANQSLEEAQKHIDEYTEQQTQGKLGAWEKDLGSETTAVLVNHMLLRAEWMKPFDSHATSPKEFFVDEHSAVWVPMMKEKASHRFLHDRELQCSVLRMDHAGNTTTFFIFPNRGKMRHLEDALLPETLIKWDSLLRTRELDFHFPKFSISRTCRLEMLLP.

A signal peptide spans 1 to 21 (MEASRWWLLVTVLMAGAHCVA). Asparagine 150 and asparagine 250 each carry an N-linked (GlcNAc...) asparagine glycan.

Belongs to the serpin family.

The protein resides in the secreted. The polypeptide is Putative serpin A13 (SERPINA13P) (Homo sapiens (Human)).